A 476-amino-acid polypeptide reads, in one-letter code: Cardiolipin synthase (476 aa).

Helical transmembrane passes span 2 to 22 (HLLI…IIFI) and 31 to 51 (WAWI…YILF). 2 PLD phosphodiesterase domains span residues 207 to 234 (INYR…GDEY) and 389 to 416 (EKGF…DIRS). Catalysis depends on residues His-212, Lys-214, Asp-219, His-394, Lys-396, and Asp-401.

It belongs to the phospholipase D family. Cardiolipin synthase subfamily.

The protein resides in the cell membrane. It catalyses the reaction 2 a 1,2-diacyl-sn-glycero-3-phospho-(1'-sn-glycerol) = a cardiolipin + glycerol. Catalyzes the reversible phosphatidyl group transfer from one phosphatidylglycerol molecule to another to form cardiolipin (CL) (diphosphatidylglycerol) and glycerol. The protein is Cardiolipin synthase (cls) of Clostridium perfringens (strain SM101 / Type A).